The chain runs to 299 residues: ATP phosphoribosyltransferase (299 aa).

It belongs to the ATP phosphoribosyltransferase family. Long subfamily. Equilibrium between an active dimeric form, an inactive hexameric form and higher aggregates. Interconversion between the various forms is largely reversible and is influenced by the natural substrates and inhibitors of the enzyme. Requires Mg(2+) as cofactor.

It localises to the cytoplasm. The enzyme catalyses 1-(5-phospho-beta-D-ribosyl)-ATP + diphosphate = 5-phospho-alpha-D-ribose 1-diphosphate + ATP. The protein operates within amino-acid biosynthesis; L-histidine biosynthesis; L-histidine from 5-phospho-alpha-D-ribose 1-diphosphate: step 1/9. Feedback inhibited by histidine. Catalyzes the condensation of ATP and 5-phosphoribose 1-diphosphate to form N'-(5'-phosphoribosyl)-ATP (PR-ATP). Has a crucial role in the pathway because the rate of histidine biosynthesis seems to be controlled primarily by regulation of HisG enzymatic activity. The sequence is that of ATP phosphoribosyltransferase from Sodalis glossinidius (strain morsitans).